Reading from the N-terminus, the 119-residue chain is MIVGIGIDIIELNRIEKMLDGKLKFMERILTERERGVAEGLKGSRLTEFVAGRFAAKEAYSKAVGTGIGKEVSFLDIEVRNDDRGKPIIITNTEHIVHLSISHSKEFAVAQVVLESSSR.

Aspartate 8 and glutamate 58 together coordinate Mg(2+).

Belongs to the P-Pant transferase superfamily. AcpS family. Mg(2+) serves as cofactor.

Its subcellular location is the cytoplasm. The enzyme catalyses apo-[ACP] + CoA = holo-[ACP] + adenosine 3',5'-bisphosphate + H(+). In terms of biological role, transfers the 4'-phosphopantetheine moiety from coenzyme A to a Ser of acyl-carrier-protein. This is Holo-[acyl-carrier-protein] synthase from Bacillus mycoides (strain KBAB4) (Bacillus weihenstephanensis).